A 305-amino-acid chain; its full sequence is Ribonuclease BN (305 aa).

Residues His-64, His-66, Asp-68, His-69, His-141, Asp-212, and His-270 each coordinate Zn(2+). The active-site Proton acceptor is the Asp-68.

The protein belongs to the RNase Z family. RNase BN subfamily. As to quaternary structure, homodimer. The cofactor is Zn(2+).

Its function is as follows. Zinc phosphodiesterase, which has both exoribonuclease and endoribonuclease activities. This is Ribonuclease BN from Salmonella gallinarum (strain 287/91 / NCTC 13346).